The primary structure comprises 320 residues: Quinolinate synthase (320 aa).

H34 and S51 together coordinate iminosuccinate. Position 96 (C96) interacts with [4Fe-4S] cluster. Residues Y122–N124 and S139 contribute to the iminosuccinate site. C182 serves as a coordination point for [4Fe-4S] cluster. Iminosuccinate contacts are provided by residues H208–E210 and T225. Residue C276 participates in [4Fe-4S] cluster binding.

It belongs to the quinolinate synthase family. Type 2 subfamily. Requires [4Fe-4S] cluster as cofactor.

It localises to the cytoplasm. The enzyme catalyses iminosuccinate + dihydroxyacetone phosphate = quinolinate + phosphate + 2 H2O + H(+). Its pathway is cofactor biosynthesis; NAD(+) biosynthesis; quinolinate from iminoaspartate: step 1/1. Functionally, catalyzes the condensation of iminoaspartate with dihydroxyacetone phosphate to form quinolinate. In Synechococcus sp. (strain ATCC 27144 / PCC 6301 / SAUG 1402/1) (Anacystis nidulans), this protein is Quinolinate synthase.